The following is a 373-amino-acid chain: tRNA N6-adenosine threonylcarbamoyltransferase (373 aa).

H133, H137, and Y154 together coordinate a divalent metal cation. Residues 154–158 (YVSGG), D186, G201, E205, and N302 contribute to the substrate site. D331 is an a divalent metal cation binding site.

This sequence belongs to the KAE1 / TsaD family. Component of the EKC/KEOPS complex composed of at least BUD32, CGI121, GON7, KAE1 and PCC1; the whole complex dimerizes. A divalent metal cation serves as cofactor.

It is found in the cytoplasm. It localises to the nucleus. It catalyses the reaction L-threonylcarbamoyladenylate + adenosine(37) in tRNA = N(6)-L-threonylcarbamoyladenosine(37) in tRNA + AMP + H(+). Its function is as follows. Component of the EKC/KEOPS complex that is required for the formation of a threonylcarbamoyl group on adenosine at position 37 (t(6)A37) in tRNAs that read codons beginning with adenine. The complex is probably involved in the transfer of the threonylcarbamoyl moiety of threonylcarbamoyl-AMP (TC-AMP) to the N6 group of A37. KAE1 likely plays a direct catalytic role in this reaction, but requires other protein(s) of the complex to fulfill this activity. The EKC/KEOPS complex also promotes both telomere uncapping and telomere elongation. The complex is required for efficient recruitment of transcriptional coactivators. In Debaryomyces hansenii (strain ATCC 36239 / CBS 767 / BCRC 21394 / JCM 1990 / NBRC 0083 / IGC 2968) (Yeast), this protein is tRNA N6-adenosine threonylcarbamoyltransferase.